The following is a 493-amino-acid chain: Sodium-coupled neutral amino acid symporter 2 (493 aa).

Over 1–72 the chain is Cytoplasmic; the sequence is MNNAEVLNVA…LPGTTSFGMS (72 aa). Positions 1-92 are regulates protein turnover upon amino acid deprivation; that stretch reads MNNAEVLNVA…SGILGLSYAM (92 aa). A helical membrane pass occupies residues 73-92; sequence VFNLSNAIVGSGILGLSYAM. N78 provides a ligand contact to Na(+). Residues 93–98 lie on the Extracellular side of the membrane; sequence ANTGIA. The helical transmembrane segment at 99-119 threads the bilayer; that stretch reads LFMILLVFVTVFSLYSIHLLL. The Cytoplasmic segment spans residues 120–154; sequence KTANEGGSLLYEQLGLKAFGIPGKLAASGSVTLQN. A helical transmembrane segment spans residues 155 to 173; that stretch reads IGAMSSYLYIVKYELPLVI. The Extracellular segment spans residues 174–184; it reads KALMDIKESNG. The chain crosses the membrane as a helical span at residues 185 to 205; the sequence is EWYLNGDYLVIMVSLAIILPL. Residues 206-213 are Cytoplasmic-facing; sequence SLLRNLGY. Residues 214-234 form a helical membrane-spanning segment; the sequence is LGYTSGFSPLCMVFFLIVVIY. Over 235–279 the chain is Extracellular; sequence KKFEIPCPLEAMNMTSNSSSHDHMAHNETDDEMCKPKYFVFNSQT. A disulfide bridge links C241 with C268. N247, N251, and N261 each carry an N-linked (GlcNAc...) asparagine glycan. The chain crosses the membrane as a helical span at residues 280 to 300; it reads VYAVPILTFSFVCHPAVLPIY. Residues 301–316 are Cytoplasmic-facing; that stretch reads QELKGRSRRRMMNVSN. A helical transmembrane segment spans residues 317-337; the sequence is VSFFAMFIMYLLAALFGYLTF. The Extracellular segment spans residues 338–358; that stretch reads YSKVEPELLHTYSKVFGAGVI. Residues 359 to 379 form a helical membrane-spanning segment; the sequence is FVVVRLAVLMAVTLTVPIVIF. A Na(+)-binding site is contributed by T373. Over 380–400 the chain is Cytoplasmic; the sequence is PIRSSLNELFCSGKDFAWIRH. A helical transmembrane segment spans residues 401–421; it reads ILITFLILAFTNVLVIFVPTI. At 422–423 the chain is on the extracellular side; it reads RD. Residues 424 to 444 traverse the membrane as a helical segment; the sequence is IFGFIGASAAAMLVFILPSAF. The Cytoplasmic portion of the chain corresponds to 445-459; sequence YIRLVKKESMKSVQK. Residues 460-482 traverse the membrane as a helical segment; sequence IGALLFLIGGIIVMIGSMTLIIL. The Extracellular portion of the chain corresponds to 483–493; sequence DWIHNSTSGGN.

It belongs to the amino acid/polyamine transporter 2 family.

It is found in the cell membrane. The catalysed reaction is L-alanine(in) + Na(+)(in) = L-alanine(out) + Na(+)(out). It catalyses the reaction glycine(in) + Na(+)(in) = glycine(out) + Na(+)(out). It carries out the reaction L-serine(in) + Na(+)(in) = L-serine(out) + Na(+)(out). The enzyme catalyses L-proline(in) + Na(+)(in) = L-proline(out) + Na(+)(out). The catalysed reaction is L-methionine(in) + Na(+)(in) = L-methionine(out) + Na(+)(out). It catalyses the reaction L-histidine(in) + Na(+)(in) = L-histidine(out) + Na(+)(out). It carries out the reaction L-asparagine(in) + Na(+)(in) = L-asparagine(out) + Na(+)(out). The enzyme catalyses L-glutamine(in) + Na(+)(in) = L-glutamine(out) + Na(+)(out). The catalysed reaction is L-threonine(in) + Na(+)(in) = L-threonine(out) + Na(+)(out). It catalyses the reaction L-leucine(in) + Na(+)(in) = L-leucine(out) + Na(+)(out). It carries out the reaction L-phenylalanine(in) + Na(+)(in) = L-phenylalanine(out) + Na(+)(out). Its activity is regulated as follows. Inhibited by N-methyl-D-glucamine. Inhibited by choline. Allosteric regulation of sodium ions binding by pH. Symporter that cotransports neutral amino acids and sodium ions from the extracellular to the intracellular side of the cell membrane. The transport is pH-sensitive, Li(+)-intolerant, electrogenic, driven by the Na(+) electrochemical gradient and cotransports of neutral amino acids and sodium ions with a stoichiometry of 1:1. The protein is Sodium-coupled neutral amino acid symporter 2 of Xenopus tropicalis (Western clawed frog).